Consider the following 346-residue polypeptide: MSKMRIGVLTGGGDCPGLNPAIRGIVMRALDYGDEVIGLKYGWAGLLKADTMPLSLEMVEDILEIGGTILGSSRTNPFKKEEDVQKCVENFKKLNLDALIAIGGEDTLGVASKFSKLGLPMIGVPKTIDKDLEETDYTLGFDTAVEVVVDAIKRLRDTARSHARVIVVEIMGRHAGWLALYGGLAGGADYILIPEVEPNLEDLYNHIRKLYARGRNHAVVAIAEGVQLPGFTYQKGQEGMVDAFGHIRLGGVGNVLAEEIQKNLGIETRAVILSHLQRGGSPSIRDRIMGLLLGKKAVDLVHEGKSGLFVAVKGNELVPVDITLIEGKTKNVDPAFYESVKTFFNK.

A diphosphate-binding site is contributed by Gly13. Glu105 is a Mg(2+) binding site. Residues 127-129 (TID), Arg164, 171-173 (MGR), Glu224, Arg269, and 275-278 (HLQR) contribute to the substrate site. Asp129 functions as the Proton acceptor in the catalytic mechanism.

It belongs to the phosphofructokinase type A (PFKA) family. Mixed-substrate PFK group III subfamily. As to quaternary structure, homodimer. The cofactor is Mg(2+).

The protein localises to the cytoplasm. It carries out the reaction beta-D-fructose 6-phosphate + diphosphate = beta-D-fructose 1,6-bisphosphate + phosphate + H(+). It functions in the pathway carbohydrate degradation; glycolysis; D-glyceraldehyde 3-phosphate and glycerone phosphate from D-glucose: step 3/4. With respect to regulation, non-allosteric. In terms of biological role, catalyzes the phosphorylation of D-fructose 6-phosphate, the first committing step of glycolysis. Uses inorganic phosphate (PPi) as phosphoryl donor instead of ATP like common ATP-dependent phosphofructokinases (ATP-PFKs), which renders the reaction reversible, and can thus function both in glycolysis and gluconeogenesis. Consistently, PPi-PFK can replace the enzymes of both the forward (ATP-PFK) and reverse (fructose-bisphosphatase (FBPase)) reactions. The protein is Pyrophosphate--fructose 6-phosphate 1-phosphotransferase of Dictyoglomus thermophilum.